We begin with the raw amino-acid sequence, 342 residues long: tRNA N6-adenosine threonylcarbamoyltransferase (342 aa).

Residues His-111 and His-115 each contribute to the Fe cation site. Substrate is bound by residues 134 to 138, Asp-167, Gly-180, and Asn-276; that span reads LVSGG. Asp-304 contributes to the Fe cation binding site.

It belongs to the KAE1 / TsaD family. The cofactor is Fe(2+).

Its subcellular location is the cytoplasm. It carries out the reaction L-threonylcarbamoyladenylate + adenosine(37) in tRNA = N(6)-L-threonylcarbamoyladenosine(37) in tRNA + AMP + H(+). Its function is as follows. Required for the formation of a threonylcarbamoyl group on adenosine at position 37 (t(6)A37) in tRNAs that read codons beginning with adenine. Is involved in the transfer of the threonylcarbamoyl moiety of threonylcarbamoyl-AMP (TC-AMP) to the N6 group of A37, together with TsaE and TsaB. TsaD likely plays a direct catalytic role in this reaction. The sequence is that of tRNA N6-adenosine threonylcarbamoyltransferase from Helicobacter acinonychis (strain Sheeba).